Here is a 449-residue protein sequence, read N- to C-terminus: Putative transporter C83.11 (449 aa).

A run of 9 helical transmembrane segments spans residues 7-27, 47-67, 84-104, 109-129, 136-156, 164-184, 205-225, 255-275, and 278-298; these read LSHI…LWYI, VTLT…CLLF, VLYT…FGSL, IPVS…VLAY, VYSA…TLAC, IVGL…NIFG, LNLL…VWLY, ILAF…ASLI, and IFVI…TQGS. 2 positions are modified to phosphoserine: Ser-348 and Ser-352. A Phosphotyrosine modification is found at Tyr-355. Positions 382–415 are enriched in polar residues; the sequence is NSVYSNEGVTSSVSGNATPASVRQSTQNDFSNSN. The segment at 382–416 is disordered; that stretch reads NSVYSNEGVTSSVSGNATPASVRQSTQNDFSNSNI.

The protein belongs to the TPT transporter family.

It is found in the membrane. In Schizosaccharomyces pombe (strain 972 / ATCC 24843) (Fission yeast), this protein is Putative transporter C83.11.